Here is a 208-residue protein sequence, read N- to C-terminus: Methylthioribulose-1-phosphate dehydratase (208 aa).

The Zn(2+) site is built by His98 and His100.

It belongs to the aldolase class II family. MtnB subfamily. It depends on Zn(2+) as a cofactor.

The catalysed reaction is 5-(methylsulfanyl)-D-ribulose 1-phosphate = 5-methylsulfanyl-2,3-dioxopentyl phosphate + H2O. The protein operates within amino-acid biosynthesis; L-methionine biosynthesis via salvage pathway; L-methionine from S-methyl-5-thio-alpha-D-ribose 1-phosphate: step 2/6. Catalyzes the dehydration of methylthioribulose-1-phosphate (MTRu-1-P) into 2,3-diketo-5-methylthiopentyl-1-phosphate (DK-MTP-1-P). The sequence is that of Methylthioribulose-1-phosphate dehydratase from Marinobacter nauticus (strain ATCC 700491 / DSM 11845 / VT8) (Marinobacter aquaeolei).